The primary structure comprises 425 residues: Pre-mRNA-splicing factor PRP46 (425 aa).

7 WD repeats span residues 111–151 (GHTG…LKVT), 154–193 (GHIM…VVRD), 196–235 (GTLS…CVLT), 238–279 (GHRG…KTLT), 281–320 (HKRN…TNFN), 322–360 (EALG…KFQK), and 371–410 (ESEK…TQDS).

This sequence belongs to the WD repeat PRL1/PRL2 family. Associated with the spliceosome.

It is found in the cytoplasm. It localises to the nucleus. Involved in pre-mRNA splicing and required for cell cycle progression at G2/M. This is Pre-mRNA-splicing factor PRP46 (PRP46) from Eremothecium gossypii (strain ATCC 10895 / CBS 109.51 / FGSC 9923 / NRRL Y-1056) (Yeast).